The chain runs to 24 residues: FLPIIASVAANVFSKIFCAISKKC.

Residues cysteine 18 and cysteine 24 are joined by a disulfide bond.

In terms of tissue distribution, expressed by the skin glands.

It localises to the secreted. In terms of biological role, antibacterial activity against Gram-positive bacterium S.aureus and Gram-negative bacterium E.coli. Has activity against C.albicans. This chain is Brevinin-1Pd, found in Lithobates pipiens (Northern leopard frog).